Consider the following 445-residue polypeptide: tRNA-2-methylthio-N(6)-dimethylallyladenosine synthase (445 aa).

In terms of domain architecture, MTTase N-terminal spans 9-125 (LKYRILTYGC…LPYLIARAKE (117 aa)). The [4Fe-4S] cluster site is built by cysteine 18, cysteine 54, cysteine 88, cysteine 162, cysteine 166, and cysteine 169. The Radical SAM core domain maps to 148-378 (RKPGLSAFVN…NRRQYQIATE (231 aa)). Residues 381–444 (QELQGSIQEV…TFSLFGEIFN (64 aa)) enclose the TRAM domain.

It belongs to the methylthiotransferase family. MiaB subfamily. Monomer. [4Fe-4S] cluster serves as cofactor.

It localises to the cytoplasm. It carries out the reaction N(6)-dimethylallyladenosine(37) in tRNA + (sulfur carrier)-SH + AH2 + 2 S-adenosyl-L-methionine = 2-methylsulfanyl-N(6)-dimethylallyladenosine(37) in tRNA + (sulfur carrier)-H + 5'-deoxyadenosine + L-methionine + A + S-adenosyl-L-homocysteine + 2 H(+). Functionally, catalyzes the methylthiolation of N6-(dimethylallyl)adenosine (i(6)A), leading to the formation of 2-methylthio-N6-(dimethylallyl)adenosine (ms(2)i(6)A) at position 37 in tRNAs that read codons beginning with uridine. This Syntrophomonas wolfei subsp. wolfei (strain DSM 2245B / Goettingen) protein is tRNA-2-methylthio-N(6)-dimethylallyladenosine synthase.